A 796-amino-acid chain; its full sequence is Toll-like receptor 6 (796 aa).

The signal sequence occupies residues 1-31 (MTKDKEPIVKSFHFVCLMIIIVGTRIQFSDG). Residues 32–586 (NEFAVDKSKR…MSELSCNITL (555 aa)) are Extracellular-facing. LRR repeat units follow at residues 54-77 (TKVL…FLSE), 78-101 (LTVL…FNQD), 102-122 (LEYL…PIVS), 123-147 (FRHL…NLSQ), 148-168 (LNFL…PIAH), 169-196 (LHLS…ILNA), 197-219 (KTLH…SVNT), 220-250 (LGCL…RGST), 251-277 (LLNF…WPKP), 278-303 (VEYL…SKTT), 304-330 (LKAL…VFSE), 331-354 (MNIM…APST), 355-378 (FKFL…TLVK), 379-404 (LETL…DMPS), 405-429 (LEIL…WVES), 430-450 (IVVL…CLPP), 451-474 (RIKV…KLEA), 475-496 (LQEL…SFSS), and 497-520 (LSVL…SCQK). Cys117 and Cys139 are disulfide-bonded. N-linked (GlcNAc...) asparagine glycosylation occurs at Asn144. Asn186 and Asn214 each carry an N-linked (GlcNAc...) asparagine glycan. Cys235 and Cys265 are disulfide-bonded. N-linked (GlcNAc...) asparagine glycosylation is found at Asn253 and Asn285. An intrachain disulfide couples Cys348 to Cys373. The N-linked (GlcNAc...) asparagine glycan is linked to Asn359. 2 N-linked (GlcNAc...) asparagine glycosylation sites follow: Asn423 and Asn434. A disulfide bridge connects residues Cys424 and Cys447. The region spanning 521-575 (MRSIKAGDNPFQCTCELREFVKNIDQVSSEVLEGWPDSYKCDYPESYRGSPLKDF) is the LRRCT domain. Asn583 carries an N-linked (GlcNAc...) asparagine glycan. The chain crosses the membrane as a helical span at residues 587–607 (LIVTIGATMLVLAVTVTSLCI). The Cytoplasmic portion of the chain corresponds to 608–796 (YLDLPWYLRM…LVTENNDVKS (189 aa)). Residues 640–781 (LQFHAFISYS…LFWANIRAAF (142 aa)) form the TIR domain.

The protein belongs to the Toll-like receptor family. Homodimer (via cytoplasmic TIR domain). Heterodimer with TLR2 via their respective extracellular domains. Binds MYD88 via their respective TIR domains. Interacts with CD36, following CD36 stimulation by oxLDL or amyloid-beta 42, and forms a heterodimer with TLR4. The trimeric complex is internalized and triggers inflammatory response. LYN kinase activity facilitates TLR4:TLR6 heterodimerization and signal initiation. The heterodimer TLR2:TLR6 interacts with CD14 and CD36 in response to triacylated lipopeptides. As to expression, detected in monocytes, CD11c+ immature dendritic cells, plasmacytoid pre-dendritic cells and dermal microvessel endothelial cells.

The protein resides in the cell membrane. Its subcellular location is the cytoplasmic vesicle. It localises to the phagosome membrane. It is found in the membrane raft. The protein localises to the golgi apparatus. Participates in the innate immune response to Gram-positive bacteria and fungi. Specifically recognizes diacylated and, to a lesser extent, triacylated lipopeptides. In response to diacylated lipopeptides, forms the activation cluster TLR2:TLR6:CD14:CD36, this cluster triggers signaling from the cell surface and subsequently is targeted to the Golgi in a lipid-raft dependent pathway. Acts via MYD88 and TRAF6, leading to NF-kappa-B activation, cytokine secretion and the inflammatory response. Recognizes mycoplasmal macrophage-activating lipopeptide-2kD (MALP-2), soluble tuberculosis factor (STF), phenol-soluble modulin (PSM) and B.burgdorferi outer surface protein A lipoprotein (OspA-L) cooperatively with TLR2. In complex with TLR4, promotes sterile inflammation in monocytes/macrophages in response to oxidized low-density lipoprotein (oxLDL) or amyloid-beta 42. In this context, the initial signal is provided by oxLDL- or amyloid-beta 42-binding to CD36. This event induces the formation of a heterodimer of TLR4 and TLR6, which is rapidly internalized and triggers inflammatory response, leading to the NF-kappa-B-dependent production of CXCL1, CXCL2 and CCL9 cytokines, via MYD88 signaling pathway, and CCL5 cytokine, via TICAM1 signaling pathway, as well as IL1B secretion. In Homo sapiens (Human), this protein is Toll-like receptor 6 (TLR6).